We begin with the raw amino-acid sequence, 838 residues long: Protein translocase subunit SecA (838 aa).

ATP-binding positions include Q86, 104–108, and D493; that span reads GEGKT. Positions 793-838 are disordered; the sequence is NTQAVSGGEDSGKKKTKKPVVKSNTVKRNDPCPCGSGKKYKNCHGQ. The Zn(2+) site is built by C824, C826, C835, and H836.

Belongs to the SecA family. As to quaternary structure, monomer and homodimer. Part of the essential Sec protein translocation apparatus which comprises SecA, SecYEG and auxiliary proteins SecDF. Other proteins may also be involved. Requires Zn(2+) as cofactor.

It is found in the cell membrane. The protein resides in the cytoplasm. It carries out the reaction ATP + H2O + cellular proteinSide 1 = ADP + phosphate + cellular proteinSide 2.. In terms of biological role, part of the Sec protein translocase complex. Interacts with the SecYEG preprotein conducting channel. Has a central role in coupling the hydrolysis of ATP to the transfer of proteins into and across the cell membrane, serving as an ATP-driven molecular motor driving the stepwise translocation of polypeptide chains across the membrane. The protein is Protein translocase subunit SecA of Oceanobacillus iheyensis (strain DSM 14371 / CIP 107618 / JCM 11309 / KCTC 3954 / HTE831).